A 162-amino-acid polypeptide reads, in one-letter code: MSLVKLESSDEKVFEIEKEIACMSVTIKNMIEDIGESDSPIPLPNVTSTILEKVLDYCRHHHQHPSPQGDDKKDEKRLDDIPPYDRDFCKVDQPTLFELILAANYLDIKPLLDVTCKTVANMIRGKTPEEIRKIFNIKNDFTPEEEEQIRKENEWCEDKGGN.

An N-acetylserine modification is found at Ser2. The tract at residues 100–162 (ILAANYLDIK…NEWCEDKGGN (63 aa)) is interaction with the F-box domain of F-box proteins. Pro143 is subject to 4-hydroxyproline. Pro143 carries O-linked (GlcNAc...) hydroxyproline glycosylation.

The protein belongs to the SKP1 family. In terms of assembly, multiprotein complex (SCF) with cullin and F-box-containing protein. Capable of undergoing aggregation. In terms of processing, O-linked glycan consists of linear Gal-Gal-Fuc-Gal-GlcNAc. Post-translationally, fpaA and fpaB seem to be identically glycosylated. Glycosylation is required for nuclear enrichment. Hydroxylated by phyA.

Its subcellular location is the cytoplasm. The protein resides in the nucleus. This is SCF ubiquitin ligase complex protein SKP1a (fpaA) from Dictyostelium discoideum (Social amoeba).